A 98-amino-acid polypeptide reads, in one-letter code: Small ribosomal subunit protein bS20 (98 aa).

A compositionally biased stretch (basic residues) spans 1-12 (MAPRKPSKKVGP). The segment at 1–34 (MAPRKPSKKVGPQKRPSAEKRVITSKKKQLRNQS) is disordered.

This sequence belongs to the bacterial ribosomal protein bS20 family.

In terms of biological role, binds directly to 16S ribosomal RNA. In Chlamydia muridarum (strain MoPn / Nigg), this protein is Small ribosomal subunit protein bS20.